Here is a 125-residue protein sequence, read N- to C-terminus: Snaclec alboaggregin-A subunit beta (125 aa).

One can recognise a C-type lectin domain in the interval 1 to 125 (GFDCPFGWSS…TRYPVCKFXG (125 aa)). Cystine bridges form between Cys4-Cys15, Cys32-Cys121, and Cys98-Cys113.

This sequence belongs to the snaclec family. As to quaternary structure, heterotetramer of the subunits alpha, alpha', beta and beta'; disulfide-linked. As to expression, expressed by the venom gland.

The protein localises to the secreted. Potent platelet activator that aggregates platelets via both GPIbalpha (GP1BA) and GPVI (GP6). Induces a tyrosine phosphorylation profile in platelets that resembles this produced by collagen, involving the time dependent tyrosine phosphorylation of Fc receptor gamma chain (FCGR1A), phospholipase Cgamma2 (PLCG2), and LAT. The polypeptide is Snaclec alboaggregin-A subunit beta (Trimeresurus albolabris (White-lipped pit viper)).